The sequence spans 382 residues: Carbamoyl phosphate synthase small chain (382 aa).

Residues 1 to 189 are CPSase; sequence MIKSALLVLE…GLPEAKSEDD (189 aa). L-glutamine contacts are provided by S47 and G241. The region spanning 193-380 is the Glutamine amidotransferase type-1 domain; sequence HVVAYDFGAK…IELIKHYRSS (188 aa). Catalysis depends on C269, which acts as the Nucleophile. The L-glutamine site is built by L270, Q273, N311, G313, and F314. Catalysis depends on residues H353 and E355.

The protein belongs to the CarA family. As to quaternary structure, composed of two chains; the small (or glutamine) chain promotes the hydrolysis of glutamine to ammonia, which is used by the large (or ammonia) chain to synthesize carbamoyl phosphate. Tetramer of heterodimers (alpha,beta)4.

The enzyme catalyses hydrogencarbonate + L-glutamine + 2 ATP + H2O = carbamoyl phosphate + L-glutamate + 2 ADP + phosphate + 2 H(+). It catalyses the reaction L-glutamine + H2O = L-glutamate + NH4(+). Its pathway is amino-acid biosynthesis; L-arginine biosynthesis; carbamoyl phosphate from bicarbonate: step 1/1. It functions in the pathway pyrimidine metabolism; UMP biosynthesis via de novo pathway; (S)-dihydroorotate from bicarbonate: step 1/3. In terms of biological role, small subunit of the glutamine-dependent carbamoyl phosphate synthetase (CPSase). CPSase catalyzes the formation of carbamoyl phosphate from the ammonia moiety of glutamine, carbonate, and phosphate donated by ATP, constituting the first step of 2 biosynthetic pathways, one leading to arginine and/or urea and the other to pyrimidine nucleotides. The small subunit (glutamine amidotransferase) binds and cleaves glutamine to supply the large subunit with the substrate ammonia. The protein is Carbamoyl phosphate synthase small chain of Salmonella typhi.